The following is a 249-amino-acid chain: ATP synthase subunit a, chloroplastic (249 aa).

5 helical membrane-spanning segments follow: residues 38–58 (GQVL…SVIA), 97–117 (VPFV…GALI), 136–156 (INTT…AGLS), 201–221 (LVVA…MMLL), and 222–242 (GLFT…AYIG).

It belongs to the ATPase A chain family. In terms of assembly, F-type ATPases have 2 components, CF(1) - the catalytic core - and CF(0) - the membrane proton channel. CF(1) has five subunits: alpha(3), beta(3), gamma(1), delta(1), epsilon(1). CF(0) has four main subunits: a, b, b' and c.

The protein localises to the plastid. It localises to the chloroplast thylakoid membrane. Functionally, key component of the proton channel; it plays a direct role in the translocation of protons across the membrane. In Chlorokybus atmophyticus (Soil alga), this protein is ATP synthase subunit a, chloroplastic.